The sequence spans 295 residues: Putative nudix hydrolase 7 (295 aa).

A Nudix hydrolase domain is found at 9–182 (SWRSAASIIL…KYALPPPQVY (174 aa)). The Nudix box motif lies at 52-73 (TDAKLGDEFRIAAVRELFEESG). Residues E67 and E71 each coordinate Mg(2+).

Belongs to the Nudix hydrolase family. The cofactor is Mg(2+). Requires Mn(2+) as cofactor.

In terms of biological role, probably mediates the hydrolysis of some nucleoside diphosphate derivatives. The chain is Putative nudix hydrolase 7 (ndx-7) from Caenorhabditis elegans.